A 342-amino-acid polypeptide reads, in one-letter code: Probable dual-specificity RNA methyltransferase RlmN (342 aa).

Glu-91 serves as the catalytic Proton acceptor. Residues 97–327 (YKHGNSICVS…TTIRREMGAD (231 aa)) form the Radical SAM core domain. Cys-104 and Cys-332 are oxidised to a cystine. Cys-111, Cys-115, and Cys-118 together coordinate [4Fe-4S] cluster. Residues 158 to 159 (GE), Ser-190, 213 to 215 (SLH), and Asn-289 contribute to the S-adenosyl-L-methionine site. Cys-332 functions as the S-methylcysteine intermediate in the catalytic mechanism.

Belongs to the radical SAM superfamily. RlmN family. Requires [4Fe-4S] cluster as cofactor.

The protein localises to the cytoplasm. The enzyme catalyses adenosine(2503) in 23S rRNA + 2 reduced [2Fe-2S]-[ferredoxin] + 2 S-adenosyl-L-methionine = 2-methyladenosine(2503) in 23S rRNA + 5'-deoxyadenosine + L-methionine + 2 oxidized [2Fe-2S]-[ferredoxin] + S-adenosyl-L-homocysteine. It carries out the reaction adenosine(37) in tRNA + 2 reduced [2Fe-2S]-[ferredoxin] + 2 S-adenosyl-L-methionine = 2-methyladenosine(37) in tRNA + 5'-deoxyadenosine + L-methionine + 2 oxidized [2Fe-2S]-[ferredoxin] + S-adenosyl-L-homocysteine. Its function is as follows. Specifically methylates position 2 of adenine 2503 in 23S rRNA and position 2 of adenine 37 in tRNAs. This is Probable dual-specificity RNA methyltransferase RlmN from Clostridium botulinum (strain Loch Maree / Type A3).